The sequence spans 1108 residues: Activity-dependent neuroprotector homeobox protein (1108 aa).

Residues 1-685 are binds to beta-catenin/CTNNB1; it reads MFQLPVNNLG…ASTITLHLVH (685 aa). Glycyl lysine isopeptide (Lys-Gly) (interchain with G-Cter in SUMO2) cross-links involve residues Lys-39 and Lys-72. The segment at 74–97 adopts a C2H2-type 1; degenerate zinc-finger fold; it reads FCCSACPFSSKFFSAYKSHFRNVH. Ser-98 carries the phosphoserine modification. The C2H2-type 2; degenerate zinc-finger motif lies at 107 to 129; the sequence is LNCPYCTFNADKKTLETHIKIFH. The disordered stretch occupies residues 133–154; the sequence is SSAPSSSLSTFKDKNKNDGLKP. Residues 143-154 are compositionally biased toward basic and acidic residues; sequence FKDKNKNDGLKP. Glycyl lysine isopeptide (Lys-Gly) (interchain with G-Cter in SUMO2) cross-links involve residues Lys-144 and Lys-155. A C2H2-type 3; degenerate zinc finger spans residues 165–188; sequence YYCKKCTYRDPLYEIVRKHIYREH. Glycyl lysine isopeptide (Lys-Gly) (interchain with G-Cter in SUMO2) cross-links involve residues Lys-203, Lys-231, Lys-266, Lys-274, Lys-278, Lys-279, Lys-311, and Lys-335. A C2H2-type 4; degenerate zinc finger spans residues 221 to 244; the sequence is IHCKRCLFMPKSYEALVQHVIEDH. Position 348 is an asymmetric dimethylarginine (Arg-348). The tract at residues 354 to 361 is neuroprotective peptide; contributes to CTNNB1-binding, but less effective than whole N-terminal region; that stretch reads NAPVSIPQ. A disordered region spans residues 360–438; sequence PQQSQSVKQL…PAATGPPPSN (79 aa). Glycyl lysine isopeptide (Lys-Gly) (interchain with G-Cter in SUMO2) cross-links involve residues Lys-367 and Lys-407. A compositionally biased stretch (polar residues) spans 393–422; the sequence is SLQTANTSLPPGQVKSPSVSQSQASRVLGQ. 2 positions are modified to phosphoserine: Ser-408 and Ser-412. A Glycyl lysine isopeptide (Lys-Gly) (interchain with G-Cter in SUMO2) cross-link involves residue Lys-426. A compositionally biased stretch (pro residues) spans 426 to 437; it reads KPPPAATGPPPS. Residues 446–468 form a C2H2-type 5; atypical zinc finger; the sequence is KICTICNELFPENVYSVHFEKEH. C2H2-type zinc fingers lie at residues 488–509 and 511–534; these read SKCL…MLIH and LSCP…RMVH. Glycyl lysine isopeptide (Lys-Gly) (interchain with G-Cter in SUMO2) cross-links involve residues Lys-599 and Lys-605. A Phosphoserine modification is found at Ser-607. Residues Lys-615, Lys-620, Lys-631, and Lys-657 each participate in a glycyl lysine isopeptide (Lys-Gly) (interchain with G-Cter in SUMO2) cross-link. The segment at 621-646 adopts a C2H2-type 8; atypical zinc-finger fold; sequence TLCPLCFSILKGPISDALAHHLRERH. The C2H2-type 9; atypical zinc-finger motif lies at 661-685; that stretch reads YKCIHCLGVYTSNMTASTITLHLVH. The interval 690 to 711 is disordered; the sequence is GKTQNGQDKTNAPSRLNQSPGL. Residues 691-709 are compositionally biased toward polar residues; that stretch reads KTQNGQDKTNAPSRLNQSP. Lys-698 participates in a covalent cross-link: Glycyl lysine isopeptide (Lys-Gly) (interchain with G-Cter in SUMO2). A Phosphoserine modification is found at Ser-708. Residues Lys-715, Lys-727, and Lys-730 each participate in a glycyl lysine isopeptide (Lys-Gly) (interchain with G-Cter in SUMO2) cross-link. Residue Ser-737 is modified to Phosphoserine. Lys-744 is covalently cross-linked (Glycyl lysine isopeptide (Lys-Gly) (interchain with G-Cter in SUMO2)). The segment at residues 753-813 is a DNA-binding region (homeobox); it reads LDPKGHEDDS…SNKRKKCVRD (61 aa). Ser-804 is modified (phosphoserine). Residues Lys-806, Lys-828, and Lys-834 each participate in a glycyl lysine isopeptide (Lys-Gly) (interchain with G-Cter in SUMO2) cross-link. A compositionally biased stretch (basic and acidic residues) spans 851 to 880; that stretch reads KDSRVNASKTVDKKHNLGKEDDSFSDSFEH. The tract at residues 851–1037 is disordered; sequence KDSRVNASKT…DTEQLKWKNS (187 aa). Ser-875, Ser-877, Ser-885, Ser-888, and Ser-904 each carry phosphoserine. Residues Lys-913, Lys-928, and Lys-941 each participate in a glycyl lysine isopeptide (Lys-Gly) (interchain with G-Cter in SUMO2) cross-link. Positions 928 to 938 are enriched in acidic residues; the sequence is KEEEEEEEEED. Residues 939–959 are compositionally biased toward basic and acidic residues; it reads GSKYETIHLTEEPAKLMHDAS. A phosphoserine mark is found at Ser-959 and Ser-961. Positions 977-988 are enriched in polar residues; it reads PSESGPGSQQIS. Lys-1022 participates in a covalent cross-link: Glycyl lysine isopeptide (Lys-Gly) (interchain with G-Cter in SUMO2). 2 positions are modified to N6-acetyllysine; alternate: Lys-1041 and Lys-1048. Residues Lys-1041 and Lys-1048 each participate in a glycyl lysine isopeptide (Lys-Gly) (interchain with G-Cter in SUMO2); alternate cross-link. The segment at 1050-1108 is disordered; the sequence is QSQWENASENAERLPNPQIEWQNSTIDSEDGEQFDSMTDGVADPMHGSLTGVKLSSQQA. Ser-1077 bears the Phosphoserine mark.

In terms of assembly, interacts (via N-terminal region) with beta-catenin/CTNNB1 (via the central armadillo domains); interaction is direct and stabilizes CTNNB1 by modulating its phosphorylation by glycogen synthase kinase-3 beta GSK3B. In terms of tissue distribution, expressed in the brain, with a higher expression in cerebellum and hippocampus. Weakly expressed in lung, kidney and intestine, and expressed at intermediate level in testis.

It is found in the nucleus. The protein localises to the chromosome. In terms of biological role, may be involved in transcriptional regulation. May mediate some of the neuroprotective peptide VIP-associated effects involving normal growth and cancer proliferation. Positively modulates WNT-beta-catenin/CTNN1B signaling, acting by regulating phosphorylation of, and thereby stabilizing, CTNNB1. May be required for neural induction and neuronal differentiation. May be involved in erythroid differentiation. In Mus musculus (Mouse), this protein is Activity-dependent neuroprotector homeobox protein (Adnp).